We begin with the raw amino-acid sequence, 952 residues long: Ubiquitin carboxyl-terminal hydrolase CYLD (952 aa).

The interval 106-589 (CEERLSLFRN…LEIMIGKKKG (484 aa)) is interaction with TRIP. CAP-Gly domains lie at 153–198 (LAER…VFVA) and 253–286 (DVLP…VQLC). The tract at residues 311 to 350 (RRPPKLAFMSRGVGDKGSSSHNKPKVTGSTSDPGSRNRSE) is disordered. Positions 327 to 346 (GSSSHNKPKVTGSTSDPGSR) are enriched in polar residues. Ser383 bears the Phosphoserine mark. The tract at residues 386–409 (EMSSDFGHSSPPPQPPSMNSLSSE) is disordered. The interval 390–465 (DFGHSSPPPQ…LPISSGNAHG (76 aa)) is interaction with TRAF2. Ser414 and Ser418 each carry phosphoserine. Residues 466–680 (LEVGSLAEVK…FTSEEKDPEE (215 aa)) are interaction with IKBKG/NEMO. The CAP-Gly 3 domain maps to 488 to 531 (GQPPGLSDVLAGLELEDECAGCTDGTFRGTRYFTCALKKALFVK). The USP domain occupies 588 to 946 (KGIQGHYNSC…DAYMCMYQSP (359 aa)). Cys597 (nucleophile) is an active-site residue. The segment at 777-829 (LEDTPRQCRICGGLAMYECRECYDDPDISAGKIKQFCKTCSTQVHLHPRRLNH) is B-box. 8 residues coordinate Zn(2+): Cys784, Cys787, Cys795, Cys798, Cys813, Cys816, His821, and His829. His867 functions as the Proton acceptor in the catalytic mechanism.

The protein belongs to the peptidase C19 family. In terms of assembly, interacts (via CAP-Gly domain) with IKBKG/NEMO (via proline-rich C-terminal region). Interacts with TRAF2 and TRIP. Interacts with PLK1, DVL1, DVL3, MAVS, TBK1, IKKE and RIGI. Interacts (via CAP-Gly domain) with microtubules. Interacts with HDAC6 and BCL3. Interacts with MAP3K7. Identified in a complex with TRAF6 and SQSTM1. Interacts with OPTN and SQSTM1. Interacts with CEP350. Interacts with RNF31; the interaction is indirect and is mediated via SPATA2. Interacts with SPATA2 (via the PUB domain); the interaction is direct and recruits CYLD to the LUBAC complex, thereby regulating TNF-alpha-induced necroptosis. In terms of processing, phosphorylated on several serine residues by IKKA and/or IKKB in response to immune stimuli. Phosphorylation requires IKBKG. Phosphorylation abolishes TRAF2 deubiquitination, interferes with the activation of Jun kinases, and strongly reduces CD40-dependent gene activation by NF-kappa-B. Ubiquitinated. Polyubiquitinated in hepatocytes treated with palmitic acid. Ubiquitination is mediated by E3 ligase TRIM47 and leads to proteasomal degradation.

It localises to the cytoplasm. Its subcellular location is the perinuclear region. The protein localises to the cytoskeleton. It is found in the cell membrane. The protein resides in the microtubule organizing center. It localises to the centrosome. Its subcellular location is the spindle. The protein localises to the cilium basal body. The enzyme catalyses Thiol-dependent hydrolysis of ester, thioester, amide, peptide and isopeptide bonds formed by the C-terminal Gly of ubiquitin (a 76-residue protein attached to proteins as an intracellular targeting signal).. Its function is as follows. Deubiquitinase that specifically cleaves 'Lys-63'- and linear 'Met-1'-linked polyubiquitin chains and is involved in NF-kappa-B activation and TNF-alpha-induced necroptosis. Negatively regulates NF-kappa-B activation by deubiquitinating upstream signaling factors. Contributes to the regulation of cell survival, proliferation and differentiation via its effects on NF-kappa-B activation. Negative regulator of Wnt signaling. Inhibits HDAC6 and thereby promotes acetylation of alpha-tubulin and stabilization of microtubules. Plays a role in the regulation of microtubule dynamics, and thereby contributes to the regulation of cell proliferation, cell polarization, cell migration, and angiogenesis. Required for normal cell cycle progress and normal cytokinesis. Inhibits nuclear translocation of NF-kappa-B. Plays a role in the regulation of inflammation and the innate immune response, via its effects on NF-kappa-B activation. Dispensable for the maturation of intrathymic natural killer cells, but required for the continued survival of immature natural killer cells. Negatively regulates TNFRSF11A signaling and osteoclastogenesis. Involved in the regulation of ciliogenesis, allowing ciliary basal bodies to migrate and dock to the plasma membrane; this process does not depend on NF-kappa-B activation. Ability to remove linear ('Met-1'-linked) polyubiquitin chains regulates innate immunity and TNF-alpha-induced necroptosis: recruited to the LUBAC complex via interaction with SPATA2 and restricts linear polyubiquitin formation on target proteins. Regulates innate immunity by restricting linear polyubiquitin formation on RIPK2 in response to NOD2 stimulation. Involved in TNF-alpha-induced necroptosis by removing linear ('Met-1'-linked) polyubiquitin chains from RIPK1, thereby regulating the kinase activity of RIPK1. Negatively regulates intestinal inflammation by removing 'Lys-63' linked polyubiquitin chain of NLRP6, thereby reducing the interaction between NLRP6 and PYCARD/ASC and formation of the NLRP6 inflammasome. Does not catalyze deubiquitination of heterotypic 'Lys-63'-/'Lys-48'-linked branched ubiquitin chains. Removes 'Lys-63' linked polyubiquitin chain of MAP3K7, which inhibits phosphorylation and blocks downstream activation of the JNK-p38 kinase cascades. Also removes 'Lys-63'-linked polyubiquitin chains of MAP3K1 and MA3P3K3, which inhibit their interaction with MAP2K1 and MAP2K2. This chain is Ubiquitin carboxyl-terminal hydrolase CYLD (Cyld), found in Mus musculus (Mouse).